A 293-amino-acid polypeptide reads, in one-letter code: Ribosomal protein L11 methyltransferase (293 aa).

S-adenosyl-L-methionine contacts are provided by T145, G166, D188, and N230.

Belongs to the methyltransferase superfamily. PrmA family.

Its subcellular location is the cytoplasm. The enzyme catalyses L-lysyl-[protein] + 3 S-adenosyl-L-methionine = N(6),N(6),N(6)-trimethyl-L-lysyl-[protein] + 3 S-adenosyl-L-homocysteine + 3 H(+). Methylates ribosomal protein L11. The polypeptide is Ribosomal protein L11 methyltransferase (Shewanella piezotolerans (strain WP3 / JCM 13877)).